The chain runs to 283 residues: Gap junction beta-1 protein (283 aa).

The Cytoplasmic portion of the chain corresponds to 1–22; that stretch reads MNWTGLYTLLSGVNRHSTAIGR. Residues 23–45 traverse the membrane as a helical segment; that stretch reads VWLSVIFIFRIMVLVVAAESVWG. Residues 46–75 are Extracellular-facing; it reads DEKSSFICNTLQPGCNSVCYDQFFPISHVR. A helical transmembrane segment spans residues 76 to 95; sequence LWSLQLILVSTPALLVAMHV. The Cytoplasmic segment spans residues 96-130; that stretch reads AHQQHIEKKMLRLEGHGDPLHLEEVKRHKVHISGT. A helical transmembrane segment spans residues 131 to 153; that stretch reads LWWTYVISVVFRLLFEAVFMYVF. Topologically, residues 154-191 are extracellular; that stretch reads YLLYPGYAMVRLVKCDVYPCPNTVDCFVSRPTEKTVFT. The chain crosses the membrane as a helical span at residues 192 to 214; it reads VFMLAASGICIILNVAEVVYLII. Residues 215 to 283 lie on the Cytoplasmic side of the membrane; sequence RACARRAQRR…AEKSDRCSAC (69 aa). A phosphoserine mark is found at Ser-233, Ser-258, Ser-266, and Ser-277.

Belongs to the connexin family. Beta-type (group I) subfamily. In terms of assembly, a connexon is composed of a hexamer of connexins. Interacts with CNST.

It localises to the cell membrane. The protein resides in the cell junction. Its subcellular location is the gap junction. Its function is as follows. One gap junction consists of a cluster of closely packed pairs of transmembrane channels, the connexons, through which materials of low MW diffuse from one cell to a neighboring cell. This chain is Gap junction beta-1 protein (GJB1), found in Homo sapiens (Human).